The sequence spans 158 residues: Large ribosomal subunit protein uL30 (158 aa).

Belongs to the universal ribosomal protein uL30 family. Part of the 50S ribosomal subunit.

The sequence is that of Large ribosomal subunit protein uL30 from Saccharolobus solfataricus (strain ATCC 35092 / DSM 1617 / JCM 11322 / P2) (Sulfolobus solfataricus).